Here is a 511-residue protein sequence, read N- to C-terminus: Putative polyol transporter 1 (511 aa).

Transmembrane regions (helical) follow at residues Phe27 to Met47, Val63 to Ala83, Tyr94 to Thr114, Phe124 to Val144, Gly151 to Ser171, Phe186 to Pro206, Ile284 to Val304, Leu324 to Val344, Ala351 to Leu371, Trp384 to Ala404, Gly424 to Leu444, and Gly454 to Leu474.

The protein belongs to the major facilitator superfamily. Sugar transporter (TC 2.A.1.1) family.

It localises to the membrane. Its function is as follows. Plasma membrane sugar-proton symporter. This Arabidopsis thaliana (Mouse-ear cress) protein is Putative polyol transporter 1 (PLT1).